The sequence spans 286 residues: Bifunctional protein FolD (286 aa).

NADP(+)-binding positions include 166–168 and Ile232; that span reads GAS.

This sequence belongs to the tetrahydrofolate dehydrogenase/cyclohydrolase family. As to quaternary structure, homodimer.

The enzyme catalyses (6R)-5,10-methylene-5,6,7,8-tetrahydrofolate + NADP(+) = (6R)-5,10-methenyltetrahydrofolate + NADPH. It catalyses the reaction (6R)-5,10-methenyltetrahydrofolate + H2O = (6R)-10-formyltetrahydrofolate + H(+). The protein operates within one-carbon metabolism; tetrahydrofolate interconversion. Its function is as follows. Catalyzes the oxidation of 5,10-methylenetetrahydrofolate to 5,10-methenyltetrahydrofolate and then the hydrolysis of 5,10-methenyltetrahydrofolate to 10-formyltetrahydrofolate. In Shewanella woodyi (strain ATCC 51908 / MS32), this protein is Bifunctional protein FolD.